A 70-amino-acid polypeptide reads, in one-letter code: Putative membrane protein insertion efficiency factor (70 aa).

This sequence belongs to the UPF0161 family.

It is found in the cell membrane. Could be involved in insertion of integral membrane proteins into the membrane. The chain is Putative membrane protein insertion efficiency factor from Lachnoclostridium phytofermentans (strain ATCC 700394 / DSM 18823 / ISDg) (Clostridium phytofermentans).